Here is a 424-residue protein sequence, read N- to C-terminus: Glutamate-1-semialdehyde 2,1-aminomutase (424 aa).

K263 carries the N6-(pyridoxal phosphate)lysine modification.

Belongs to the class-III pyridoxal-phosphate-dependent aminotransferase family. HemL subfamily. Homodimer. It depends on pyridoxal 5'-phosphate as a cofactor.

The protein resides in the cytoplasm. The enzyme catalyses (S)-4-amino-5-oxopentanoate = 5-aminolevulinate. Its pathway is porphyrin-containing compound metabolism; protoporphyrin-IX biosynthesis; 5-aminolevulinate from L-glutamyl-tRNA(Glu): step 2/2. This is Glutamate-1-semialdehyde 2,1-aminomutase from Campylobacter jejuni (strain RM1221).